Here is a 516-residue protein sequence, read N- to C-terminus: BAR/IMD domain-containing adapter protein 2-like 2 (516 aa).

Residues 1–227 (MSGVNSDLLH…PTPLDQEAQL (227 aa)) enclose the IMD domain. Residues 200 to 273 (ADGWKEKVSE…SSSVGESLGL (74 aa)) form a disordered region. Basic and acidic residues predominate over residues 201–212 (DGWKEKVSESRS). The span at 226–236 (QLKSSVGSLLQ) shows a compositional bias: polar residues. The span at 238-247 (GDREMDREPL) shows a compositional bias: basic and acidic residues. The span at 249 to 270 (RVPSRAPSPLPSRSRSSSVGES) shows a compositional bias: low complexity. The SH3 domain maps to 274–337 (GGGRSMRAIV…PAAYVASTED (64 aa)). Polar residues predominate over residues 355–376 (LLEPTSQSESDTQTYSEVSSPV). Positions 355 to 516 (LLEPTSQSES…TNDRSAPRIQ (162 aa)) are disordered. Positions 434 to 450 (PDRRAESHFESKVELKN) are enriched in basic and acidic residues. Over residues 454-465 (LPPPAPPLPNSP) the composition is skewed to pro residues.

Its subcellular location is the cell membrane. Phosphoinositides-binding protein that induces the formation of planar or gently curved membrane structures. This is BAR/IMD domain-containing adapter protein 2-like 2 (baiap2l2) from Danio rerio (Zebrafish).